A 387-amino-acid chain; its full sequence is Exodeoxyribonuclease 7 large subunit (387 aa).

Belongs to the XseA family. In terms of assembly, heterooligomer composed of large and small subunits.

Its subcellular location is the cytoplasm. It carries out the reaction Exonucleolytic cleavage in either 5'- to 3'- or 3'- to 5'-direction to yield nucleoside 5'-phosphates.. Bidirectionally degrades single-stranded DNA into large acid-insoluble oligonucleotides, which are then degraded further into small acid-soluble oligonucleotides. The protein is Exodeoxyribonuclease 7 large subunit of Parasynechococcus marenigrum (strain WH8102).